The sequence spans 186 residues: Cell division protein SepF (186 aa).

Disordered regions lie at residues 14–59 and 157–186; these read EHDE…NETS and GRSQESNETSSSVSSDNFPTWGYETSRLAQ. Acidic residues predominate over residues 16-27; the sequence is DEYEEDYDEEME. Residues 159–171 show a composition bias toward low complexity; that stretch reads SQESNETSSSVSS.

This sequence belongs to the SepF family. Homodimer. Interacts with FtsZ.

The protein resides in the cytoplasm. In terms of biological role, cell division protein that is part of the divisome complex and is recruited early to the Z-ring. Probably stimulates Z-ring formation, perhaps through the cross-linking of FtsZ protofilaments. Its function overlaps with FtsA. This chain is Cell division protein SepF, found in Synechocystis sp. (strain ATCC 27184 / PCC 6803 / Kazusa).